The primary structure comprises 87 residues: Cell division topological specificity factor (87 aa).

This sequence belongs to the MinE family.

Its function is as follows. Prevents the cell division inhibition by proteins MinC and MinD at internal division sites while permitting inhibition at polar sites. This ensures cell division at the proper site by restricting the formation of a division septum at the midpoint of the long axis of the cell. The chain is Cell division topological specificity factor from Clostridium botulinum (strain ATCC 19397 / Type A).